A 541-amino-acid polypeptide reads, in one-letter code: 2-succinyl-5-enolpyruvyl-6-hydroxy-3-cyclohexene-1-carboxylate synthase (541 aa).

It belongs to the TPP enzyme family. MenD subfamily. Homodimer. Mg(2+) serves as cofactor. It depends on Mn(2+) as a cofactor. Thiamine diphosphate is required as a cofactor.

It catalyses the reaction isochorismate + 2-oxoglutarate + H(+) = 5-enolpyruvoyl-6-hydroxy-2-succinyl-cyclohex-3-ene-1-carboxylate + CO2. The protein operates within quinol/quinone metabolism; 1,4-dihydroxy-2-naphthoate biosynthesis; 1,4-dihydroxy-2-naphthoate from chorismate: step 2/7. It participates in quinol/quinone metabolism; menaquinone biosynthesis. In terms of biological role, catalyzes the thiamine diphosphate-dependent decarboxylation of 2-oxoglutarate and the subsequent addition of the resulting succinic semialdehyde-thiamine pyrophosphate anion to isochorismate to yield 2-succinyl-5-enolpyruvyl-6-hydroxy-3-cyclohexene-1-carboxylate (SEPHCHC). This Leuconostoc citreum (strain KM20) protein is 2-succinyl-5-enolpyruvyl-6-hydroxy-3-cyclohexene-1-carboxylate synthase.